Here is a 263-residue protein sequence, read N- to C-terminus: GTP cyclohydrolase 1 type 2 homolog (263 aa).

Residues His65, His66, Asp104, His225, and Glu229 each coordinate a divalent metal cation.

The protein belongs to the GTP cyclohydrolase I type 2/NIF3 family. In terms of assembly, homohexamer.

The sequence is that of GTP cyclohydrolase 1 type 2 homolog from Nostoc sp. (strain PCC 7120 / SAG 25.82 / UTEX 2576).